The sequence spans 527 residues: MNYDKLFQNVINNKLTDLELVLTDPENNNLVLNLHKIVLDINCPYFETLFSNNFIDSNMKKLNLFVEDSYITRDIIYNFYGQTNRSTDYPDWLYQLKKIKCQNFLCMKPDFYRLSDFVFDKDNFDELLNTIDSIGYDDKVVSLIFKNMPVDYDLVKFPIELLNRMLDVSGFYIMYYDNNRFSMYNQYCEFVVFDGISDFDYSPNSQIIYVPNSQEIVYVSEKIVVFNIETQISRITDSINPVSSKNYPTLCPDQEHIIYYNNKWDAICKFNVKTMKLIGTWRASNGSEINMDENNGTYFFDSIGCKIVFSPSGDKFVLITDGIICYDVKTIKVCWRFNKIVPLSRVDLGYVPTCIRDVMYSLCRKYIFYLTKYGLFVINSSNGHLVSEMKVRGISICHITCDIVAILTYDNSGIIMYDYQNNMIISELNFSDNICFGGESKICMNYFDGKLFIIGSNNTNRIDYNYIINISDFTYEKNFTEKIDKSYYVCDNDIIKYNNCCNNCFNIVTDFKSVLRDKIKNHIESIN.

The region spanning 16-89 (TDLELVLTDP…YGQTNRSTDY (74 aa)) is the BTB domain.

The protein belongs to the mimivirus BTB/WD family.

In Acanthamoeba polyphaga (Amoeba), this protein is Putative BTB/POZ domain-containing protein R225.